Here is a 142-residue protein sequence, read N- to C-terminus: Large ribosomal subunit protein uL11 (142 aa).

Belongs to the universal ribosomal protein uL11 family. As to quaternary structure, part of the ribosomal stalk of the 50S ribosomal subunit. Interacts with L10 and the large rRNA to form the base of the stalk. L10 forms an elongated spine to which L12 dimers bind in a sequential fashion forming a multimeric L10(L12)X complex. In terms of processing, one or more lysine residues are methylated.

Its function is as follows. Forms part of the ribosomal stalk which helps the ribosome interact with GTP-bound translation factors. The protein is Large ribosomal subunit protein uL11 of Gamma-proteobacterium EBAC31A08.